We begin with the raw amino-acid sequence, 289 residues long: Somatostatin-like receptor F_48D10.1 (289 aa).

Residues 1 to 57 lie on the Extracellular side of the membrane; that stretch reads MEPLDQTPGFPLSPEPNYWYETTPSLLLVSYPHLLDISSNQSTQSVPFQGSSALLTA. The N-linked (GlcNAc...) asparagine glycan is linked to Asn-40. A helical transmembrane segment spans residues 58 to 79; the sequence is VIYITVFVVGLTGNTLAIYVVL. The Cytoplasmic portion of the chain corresponds to 80 to 89; it reads RYAGMKTVTN. Residues 90 to 110 form a helical membrane-spanning segment; sequence IYILNLAVADELYIVGLPFLA. Topologically, residues 111–126 are extracellular; sequence TQNVLSYWPFGSFLCR. A disulfide bridge links Cys-125 with Cys-221. A helical transmembrane segment spans residues 127–148; it reads VVMTADSMNQFTSIFCLTVMSI. Residues 149 to 170 are Cytoplasmic-facing; it reads DRYLAVVHPIRSTKWRHPRVAK. A helical transmembrane segment spans residues 171 to 191; it reads VVSAAVWAVSFVVVLPVVIFS. The Extracellular segment spans residues 192 to 240; that stretch reads DVQVRPSRPLQVGTSSKCLVKRVQETFNSCNMIWPEPKNVWSTAFILYT. The chain crosses the membrane as a helical span at residues 241–261; it reads AMVGFFGPLLIICLCYLLIVI. Residues 262 to 289 are Cytoplasmic-facing; sequence KVRHRMSAAQVGAVVSTCPLNICCLSRR.

The protein belongs to the G-protein coupled receptor 1 family.

It localises to the cell membrane. This is Somatostatin-like receptor F_48D10.1 from Takifugu rubripes (Japanese pufferfish).